The following is a 561-amino-acid chain: Zinc finger protein 37A (561 aa).

A KRAB domain is found at 8-79 (VSFRDVTVGF…EEKFPSQSHL (72 aa)). A C2H2-type 1; degenerate zinc finger spans residues 146-168 (FEYNECGKAFPENSLFLVHKRGY). A C2H2-type 2; degenerate zinc finger spans residues 243–265 (IEYNECGTFFSEKLVLHLQQRTH). C2H2-type zinc fingers lie at residues 271-293 (YECH…QRTH), 299-321 (YECH…QRIH), 327-349 (YGCH…QRTH), 355-377 (YECH…QKTH), 383-405 (YECY…QRIH), 411-433 (YECN…LRTH), 439-461 (YECI…LRRH), 467-489 (FGCN…QRTH), 495-517 (YGCN…HRTH), and 523-545 (YECN…QRIH).

It belongs to the krueppel C2H2-type zinc-finger protein family.

It is found in the nucleus. In terms of biological role, may be involved in transcriptional regulation. The sequence is that of Zinc finger protein 37A (ZNF37A) from Homo sapiens (Human).